The sequence spans 425 residues: Glutamate-1-semialdehyde 2,1-aminomutase (425 aa).

Lys-264 carries the post-translational modification N6-(pyridoxal phosphate)lysine.

This sequence belongs to the class-III pyridoxal-phosphate-dependent aminotransferase family. HemL subfamily. In terms of assembly, homodimer. The cofactor is pyridoxal 5'-phosphate.

The protein localises to the cytoplasm. The catalysed reaction is (S)-4-amino-5-oxopentanoate = 5-aminolevulinate. It participates in porphyrin-containing compound metabolism; protoporphyrin-IX biosynthesis; 5-aminolevulinate from L-glutamyl-tRNA(Glu): step 2/2. In Leptospira biflexa serovar Patoc (strain Patoc 1 / Ames), this protein is Glutamate-1-semialdehyde 2,1-aminomutase.